We begin with the raw amino-acid sequence, 1295 residues long: Phosphoribosylformylglycinamidine synthase (1295 aa).

Residues glycine 305–aspartate 316, threonine 384–tyrosine 386, and alanine 676 contribute to the ATP site. Mg(2+) is bound by residues aspartate 677, glutamate 716, asparagine 720, and aspartate 884. Serine 886 contacts ATP. In terms of domain architecture, Glutamine amidotransferase type-1 spans valine 1042 to glycine 1295. Cysteine 1135 serves as the catalytic Nucleophile. Residues histidine 1260 and glutamate 1262 contribute to the active site.

It in the N-terminal section; belongs to the FGAMS family. Monomer.

It localises to the cytoplasm. The enzyme catalyses N(2)-formyl-N(1)-(5-phospho-beta-D-ribosyl)glycinamide + L-glutamine + ATP + H2O = 2-formamido-N(1)-(5-O-phospho-beta-D-ribosyl)acetamidine + L-glutamate + ADP + phosphate + H(+). It participates in purine metabolism; IMP biosynthesis via de novo pathway; 5-amino-1-(5-phospho-D-ribosyl)imidazole from N(2)-formyl-N(1)-(5-phospho-D-ribosyl)glycinamide: step 1/2. In terms of biological role, phosphoribosylformylglycinamidine synthase involved in the purines biosynthetic pathway. Catalyzes the ATP-dependent conversion of formylglycinamide ribonucleotide (FGAR) and glutamine to yield formylglycinamidine ribonucleotide (FGAM) and glutamate. The chain is Phosphoribosylformylglycinamidine synthase from Idiomarina loihiensis (strain ATCC BAA-735 / DSM 15497 / L2-TR).